The sequence spans 388 residues: Na(+)/H(+) antiporter NhaA (388 aa).

At 1–11 (MKHLHRFFSSD) the chain is on the cytoplasmic side. A helical transmembrane segment spans residues 12–31 (ASGGIILIIAAILAMIMANS). Topologically, residues 32–58 (GATSGWYHDFLETPVQLRVGSLEINKN) are periplasmic. The tract at residues 45-58 (PVQLRVGSLEINKN) is important for dimerization. Residues 59-80 (MLLWINDALMAVFFLLVGLEVK) form a helical membrane-spanning segment. Over 81–96 (RELMQGSLASLRQAAF) the chain is Cytoplasmic. The helical transmembrane segment at 97–116 (PVIAAIGGMIVPALLYLAFN) threads the bilayer. Over 117–122 (YADPIT) the chain is Periplasmic. A helical membrane pass occupies residues 123–130 (REGWAIPA). Topologically, residues 131-154 (ATDIAFALGVLALLGSRVPLALKI) are cytoplasmic. The helical transmembrane segment at 155–176 (FLMALAIIDDLGAIIIIALFYT) threads the bilayer. Over 177 to 180 (NDLS) the chain is Periplasmic. Residues 181 to 200 (MASLGVAAVAIAVLAVLNLC) traverse the membrane as a helical segment. At 201–204 (GARR) the chain is on the cytoplasmic side. Residues 205–222 (TGVYILVGVVLWTAVLKS) form a helical membrane-spanning segment. Residue Gly-223 is a topological domain, periplasmic. A helical membrane pass occupies residues 224 to 236 (VHATLAGVIVGFF). At 237-253 (IPLKEKHGRSPAKRLEH) the chain is on the cytoplasmic side. A helical transmembrane segment spans residues 254-272 (VLHPWVAYLILPLFAFANA). The Periplasmic segment spans residues 273–286 (GVSLQGVTLDGLTS). The helical transmembrane segment at 287–310 (ILPLGIIAGLLIGKPLGISLFCWL) threads the bilayer. Residues 311–339 (ALRLKLAHLPEGTTYQQIMVVGILCGIGF) lie on the Cytoplasmic side of the membrane. The chain crosses the membrane as a helical span at residues 340-350 (TMSIFIASLAF). Residues 351–357 (GSVDPEL) are Periplasmic-facing. A helical membrane pass occupies residues 358–380 (INWAKLGILVGSISSAVIGYSWL). The Cytoplasmic portion of the chain corresponds to 381–388 (RVRLRPSV).

The protein belongs to the NhaA Na(+)/H(+) (TC 2.A.33) antiporter family. As to quaternary structure, monomer. Homodimer. Under routine stress conditions, the monomeric form is fully functional. However, the dimeric form is much more efficient in conferring growth resistance under extreme stress conditions.

It localises to the cell inner membrane. The enzyme catalyses Na(+)(in) + 2 H(+)(out) = Na(+)(out) + 2 H(+)(in). The catalysed reaction is Li(+)(in) + 2 H(+)(out) = Li(+)(out) + 2 H(+)(in). Activity is regulated by pH. Active at alkaline pH. Activity is strongly down-regulated below pH 6.5 and a dramatic increase in activity is observed upon increase of the pH from 6.5 to 8.5. In terms of biological role, na(+)/H(+) antiporter that extrudes sodium in exchange for external protons. Plays an important role in the regulation of intracellular pH, cellular Na(+) content and cell volume. Catalyzes the exchange of 2 H(+) per Na(+). This stoichiometry applies at both neutral and alkaline pH values. In addition, can also transport lithium and is involved in lithium detoxification. Binding of the Li(+) and H(+) ligands to NhaA is coupled and antagonistic. The chain is Na(+)/H(+) antiporter NhaA from Escherichia coli (strain K12).